A 116-amino-acid polypeptide reads, in one-letter code: MLNVTKGKEIRIEVRFADNFIKRFLGLMFRKPRYVLIFVLPLETRINASVHGLFMREAIDVIFLNSNKEVVDLTVLKPWRFYVPKRPAKYIVEGPRGIIEALSVEVGDRLEWNRMI.

This sequence belongs to the UPF0127 family.

This is UPF0127 protein PF1050 from Pyrococcus furiosus (strain ATCC 43587 / DSM 3638 / JCM 8422 / Vc1).